Here is a 497-residue protein sequence, read N- to C-terminus: MDPPSLLSLALLLLAAAAAAAFVLFPRRRSPEKKPSSGNPGSLSELIKNGHRILDWMVEILAASPTNTVATYMGVVTANPANVEHMLKTKFENYPKGDRFVTLLEDFLGRGIFNSDGDHWKLQRKTASLEFNTKTIRTFVMENVRVSVVDRLIPIFARAAASGETIDLQETLERFAFDNVCKVSFNEDTGRLSGDDTMEGREFARAFEQASELIVGRYKHPFLLSWKLMRFFNIGDERRLKEKIATVHRFATSVIRRRKSAASLGDDLLSRFIAEADYPDEFLRDIIISFVLAGRDTTSATLTWFFWLASTRPEVLARVEAEVNAVRRKNGTCAGVMFTLEEVREMDFLHAALSEALRLYPPVPLQTRACHESDEFPDGTKVRPGTTVMYNSYAMGRMKSIWGEDYAEFRPERWLDKGGGFQPRSPFRFPVFHAGPRMCLGKEMAYIQMKAVAASVVERFEVVVMDKEKVREKDYTMILRVKGGLPVRLKEKSVAAG.

Residues 6 to 26 traverse the membrane as a helical segment; that stretch reads LLSLALLLLAAAAAAAFVLFP. Residue Cys439 coordinates heme.

It belongs to the cytochrome P450 family. In terms of tissue distribution, mainly expressed in roots and, at low levels, in leaves, fruits and stems.

Its subcellular location is the membrane. The protein operates within steroid metabolism; cholesterol metabolism. Involved in the biosynthesis of spiroketal steroid and saponin natural products from cholesterol such as diosgenin and analogs (e.g. furostanol and spirostanol), plant defense compounds used as main precursors for the industrial production of steroid hormones. During the 5,6-spiroketalization of cholesterol, may catalyze the 27-monohydroxylation of furostanol-type steroid to an intermediate product that undergoes a stereospecific formation of the terminal heterocycle to yield diosgenin. The protein is Cytochrome P450 CYP94D108 of Paris polyphylla (Daiswa polyphylla).